We begin with the raw amino-acid sequence, 119 residues long: Holo-[acyl-carrier-protein] synthase (119 aa).

Residues Asp-8 and Glu-58 each contribute to the Mg(2+) site.

It belongs to the P-Pant transferase superfamily. AcpS family. Mg(2+) is required as a cofactor.

It is found in the cytoplasm. The enzyme catalyses apo-[ACP] + CoA = holo-[ACP] + adenosine 3',5'-bisphosphate + H(+). In terms of biological role, transfers the 4'-phosphopantetheine moiety from coenzyme A to a Ser of acyl-carrier-protein. The chain is Holo-[acyl-carrier-protein] synthase from Bacillus mycoides (strain KBAB4) (Bacillus weihenstephanensis).